The following is a 230-amino-acid chain: Ephrin-A3 (230 aa).

The signal sequence occupies residues 1–22; the sequence is MAAAPLLLLLLLVPVPLLPLLA. The 132-residue stretch at 30 to 161 folds into the Ephrin RBD domain; sequence GNRHAVYWNS…RMKVFVCCAS (132 aa). N-linked (GlcNAc...) asparagine glycans are attached at residues Asn38, Asn67, Asn84, and Asn92. Cystine bridges form between Cys63–Cys102 and Cys91–Cys150. Gly206 is lipidated: GPI-anchor amidated glycine. The propeptide at 207-230 is removed in mature form; sequence TSPKREHLPLAVGIAFFLMTLLAS.

This sequence belongs to the ephrin family. In terms of assembly, interacts with EPHA8; activates EPHA8. Expressed in myogenic progenitor cells.

It localises to the cell membrane. Functionally, cell surface GPI-bound ligand for Eph receptors, a family of receptor tyrosine kinases which are crucial for migration, repulsion and adhesion during neuronal, vascular and epithelial development. Binds promiscuously Eph receptors residing on adjacent cells, leading to contact-dependent bidirectional signaling into neighboring cells. The signaling pathway downstream of the receptor is referred to as forward signaling while the signaling pathway downstream of the ephrin ligand is referred to as reverse signaling. This is Ephrin-A3 (Efna3) from Mus musculus (Mouse).